Reading from the N-terminus, the 110-residue chain is Toxin HigB-2 (110 aa).

Toxic component of a type II toxin-antitoxin (TA) system. Inhibits translation by cleavage of mRNA. The sequence is that of Toxin HigB-2 (higB-2) from Vibrio cholerae serotype O1 (strain ATCC 39315 / El Tor Inaba N16961).